The sequence spans 642 residues: Cysteine-rich receptor-like protein kinase 27 (642 aa).

Positions 1–24 are cleaved as a signal peptide; that stretch reads MASTSIMLSSFFSFFFLTFFVTYA. The Extracellular portion of the chain corresponds to 25 to 274; sequence QQNVTVHTIC…QGKSKDRSKT (250 aa). N-linked (GlcNAc...) asparagine glycans are attached at residues N27, N40, N44, N70, N145, N173, and N258. 2 Gnk2-homologous domains span residues 29–130 and 136–240; these read TVHT…SRII and PVPF…VYPF. A helical membrane pass occupies residues 275-295; that stretch reads LIFAVVPIVAIILGLVFLFIY. Residues 296 to 642 are Cytoplasmic-facing; the sequence is LKRRRKKKTL…DVSLTDLSAR (347 aa). Residues 333–620 enclose the Protein kinase domain; it reads FSLTNKIGEG…QLPKPSQPGF (288 aa). ATP is bound by residues 339–347 and K361; that span reads IGEGGFGVV. Y406 is subject to Phosphotyrosine. Residue D458 is the Proton acceptor of the active site. S462 carries the post-translational modification Phosphoserine. At T498 the chain carries Phosphothreonine. Position 506 is a phosphotyrosine (Y506).

The protein belongs to the protein kinase superfamily. Ser/Thr protein kinase family. CRK subfamily.

The protein resides in the membrane. The catalysed reaction is L-seryl-[protein] + ATP = O-phospho-L-seryl-[protein] + ADP + H(+). It carries out the reaction L-threonyl-[protein] + ATP = O-phospho-L-threonyl-[protein] + ADP + H(+). This chain is Cysteine-rich receptor-like protein kinase 27 (CRK27), found in Arabidopsis thaliana (Mouse-ear cress).